A 1153-amino-acid polypeptide reads, in one-letter code: Cingulin (1153 aa).

The interval 1-342 is head; the sequence is MAEPRGPVDH…LVMTTGSAKV (342 aa). Residues 17–37 are disordered; the sequence is ITEPAGDAQMRTGRRPAKDAR. Positions 38–52 match the ZIM motif; the sequence is ANTYGVAVRVQGIAG. Residues 44 to 57 are interaction with TJP1/ZO1; sequence AVRVQGIAGQPFVV. Residues Ser-86, Ser-126, Ser-128, Ser-131, Ser-146, Ser-205, Ser-208, and Ser-324 each carry the phosphoserine modification. Disordered regions lie at residues 131 to 151 and 177 to 253; these read SLLG…LELG and DRHQ…SRAR. Positions 207–220 are enriched in basic and acidic residues; it reads DSRHLRDPPEDRRS. Positions 343-1110 form a coiled coil; the sequence is LAGQGELAQK…ALEKDSWRKA (768 aa). Lys-562 carries the N6-acetyllysine modification. Disordered stretches follow at residues 755–796, 823–861, and 1110–1131; these read AQRG…QKRL, QSQL…LSRL, and AARS…EEFD. 2 stretches are compositionally biased toward basic and acidic residues: residues 772–796 and 827–853; these read ALEE…QKRL and EDYK…EAEK. The tail stretch occupies residues 1111 to 1153; sequence ARSAAESSLQQEGLSSDEEFDGVYNPNSIASLLTESGLQTSSC. The span at 1115–1124 shows a compositional bias: polar residues; that stretch reads AESSLQQEGL. 2 positions are modified to phosphoserine: Ser-1125 and Ser-1126.

Belongs to the cingulin family. Homodimer. Interacts with TJP1/ZO1 and SPEF1.

It is found in the cell junction. The protein resides in the tight junction. Functionally, probably plays a role in the formation and regulation of the tight junction (TJ) paracellular permeability barrier. This chain is Cingulin, found in Sorex araneus (Eurasian common shrew).